A 113-amino-acid chain; its full sequence is Probable leucocin-A immunity protein (113 aa).

It belongs to the immunity protein EntA family.

Its function is as follows. Imparts immunity to leucocin-A to naturally sensitive host strains. The chain is Probable leucocin-A immunity protein from Leuconostoc gelidum.